Reading from the N-terminus, the 309-residue chain is MSEINISAAAVKELREKTGAGMMDCKKALIETSGNFEEAIDFLRKKGLAVAAKKAGRIAAEGLTAVKVDGLTGVVVEVNSETDFVARNARFQDLAKDIANLAVIAKNIDTLKTSKMQSGKSVEEEIIANIATIGENLALRRMDILEISEGAIGSYVHNEVVPNLGKISVLVGLVSNAKDKAKLEALAKQIAVHVAGNNPQSIDDSSLDQALVERERKVFFEKSKEEGKPDNIIEKMVEGRIRKFFSEVVLLQQNFLFDPKLTVAEVIKNAEQELGAEIKIAKFIRYELGEGIEHEEKNFVDEVAAITRS.

The involved in Mg(2+) ion dislocation from EF-Tu stretch occupies residues 82–85; sequence TDFV.

This sequence belongs to the EF-Ts family.

It localises to the cytoplasm. Associates with the EF-Tu.GDP complex and induces the exchange of GDP to GTP. It remains bound to the aminoacyl-tRNA.EF-Tu.GTP complex up to the GTP hydrolysis stage on the ribosome. The chain is Elongation factor Ts from Rickettsia akari (strain Hartford).